Reading from the N-terminus, the 472-residue chain is Replicative helicase loading/DNA remodeling protein DnaB (472 aa).

Positions 1–112 (MADYWKDVLP…ERLFIYELLP (112 aa)) are DDBH1. Residues 210–302 (DLFLAGLSET…VHLREGEQPA (93 aa)) form a DDBH2-1 region. The interval 303-411 (EEDSLDGKLI…RQYLEWAEGK (109 aa)) is DDBH2-2. The segment at 415-472 (SKRNQKVIREEKLPDWMTEKETASDSESGQQKLHPQDLEEQKKKMMEEMQKLKKYSAY) is disordered. Basic and acidic residues-rich tracts occupy residues 421-437 (VIRE…KETA) and 448-465 (HPQD…EMQK).

It belongs to the DnaB/DnaD family. Homotetramer. Also forms higher-order oligomers, can be induced by some ssDNA. The DNA replisome assembles sequentially on oriC in this order; DnaA, DnaD, DnaB, DnaI-DnaC helicase. In atomic force microscopy forms a square with a small central hole. Part of the replication restart primosome which assembles in this order; PriA, DnaD then DnaB. The preferred DNA substrate mimics an arrested DNA replication fork with unreplicated lagging strand. Interacts with DnaC, but probably not as a tetramer. Interacts with DnaD but no interaction with PriA was seen. Interacts with cell cycle regulator CcrZ. In terms of processing, in early growth phase only full-length protein is detected, during late growth and stationary phase full-length and C-terminally truncated proteins are seen (at protein level). Truncated protein is only seen in cytoplasmic fractions.

The protein localises to the cytoplasm. The protein resides in the cell membrane. Its function is as follows. Helps DnaI load the DnaC replicative helicase onto single-stranded (ss)DNA. During DNA replication from the origin of replication (oriC) in the DNA replisome, DnaD is required after DnaA, before DnaB and before subsequent helicase DnaC loading. Component of the replication restart primosome, which reloads the replicative helicase on sites other than oriC. DnaB, DnaD and DnaI may also be required for a PriA-independent pathway of replication fork restart. DnaB and DnaD work together to allow DnaB access to ssDNA. DNA replication at oriC might originate on the inner face of the cell membrane; DnaB is essential for both replication initiation and cell membrane attachment of the origin region of the chromosome and plasmids. Weakly binds ssDNA, preferentially binds double-stranded (ds)DNA, and replication fork-like substrates. Remodels DNA, laterally compacts supercoiled plasmid and linear DNA, forms beads along the dsDNA. Together DnaB and DnaD form bipolar complexes on plasmid DNA. DnaB and DnaD are also required to load helicase on the repN plasmid origin of replication (oriN). This Bacillus subtilis (strain 168) protein is Replicative helicase loading/DNA remodeling protein DnaB.